The chain runs to 92 residues: UPF0223 protein SMU_1141c (92 aa).

This sequence belongs to the UPF0223 family.

The sequence is that of UPF0223 protein SMU_1141c from Streptococcus mutans serotype c (strain ATCC 700610 / UA159).